The following is a 990-amino-acid chain: Aminopeptidase Q (990 aa).

Topologically, residues Gly-2–Arg-13 are cytoplasmic. The chain crosses the membrane as a helical; Signal-anchor for type II membrane protein span at residues Ala-14–Ala-34. At Ala-35–Thr-990 the chain is on the lumenal side. Residues Leu-48–Gly-91 are disordered. N-linked (GlcNAc...) asparagine glycans are attached at residues Asn-132 and Asn-168. Substrate is bound at residue Glu-240. Residues Asn-261, Asn-288, Asn-319, and Asn-346 are each glycosylated (N-linked (GlcNAc...) asparagine). His-379–Asn-383 lines the substrate pocket. Position 415 (His-415) interacts with Zn(2+). Catalysis depends on Glu-416, which acts as the Proton acceptor. Zn(2+)-binding residues include His-419 and Glu-438. Tyr-503 serves as the catalytic Proton donor. 2 N-linked (GlcNAc...) asparagine glycosylation sites follow: Asn-607 and Asn-653.

Belongs to the peptidase M1 family. Homodimer. Zn(2+) serves as cofactor. N-glycosylated. In terms of tissue distribution, specifically expressed in placenta and not in other tissues. Mainly found at the cell surface region of the extravillous trophoblasts. Detected on extravillous trophoblasts in the outer layer of the chorion laeve in the fetal membrane Not detected on either fetal amnionic epithelial cells or maternal decidual cells. Also detected in the migrating extravillous trophoblasts in the maternal decidual tissues (at protein level).

It localises to the membrane. With respect to regulation, inhibited by bestatin. In terms of biological role, metalloprotease which may be important for placentation by regulating biological activity of key peptides at the embryo-maternal interface. On synthetic substrates it shows a marked preference for Leu-4-methylcoumaryl-7-amide (Leu-MCA) over Met-MCA, Arg-LCA and Lys-LCA. Cleaves the N-terminal amino acid of several peptides such as angiotensin-3, kisspeptin-10 and endokinin C. This Homo sapiens (Human) protein is Aminopeptidase Q.